A 185-amino-acid chain; its full sequence is Threonylcarbamoyl-AMP synthase (185 aa).

The region spanning 4–185 is the YrdC-like domain; the sequence is SFRVQQAARE…LATGEVVRPG (182 aa).

The protein belongs to the SUA5 family. TsaC subfamily.

Its subcellular location is the cytoplasm. The catalysed reaction is L-threonine + hydrogencarbonate + ATP = L-threonylcarbamoyladenylate + diphosphate + H2O. Required for the formation of a threonylcarbamoyl group on adenosine at position 37 (t(6)A37) in tRNAs that read codons beginning with adenine. Catalyzes the conversion of L-threonine, HCO(3)(-)/CO(2) and ATP to give threonylcarbamoyl-AMP (TC-AMP) as the acyladenylate intermediate, with the release of diphosphate. This Pseudomonas putida (strain GB-1) protein is Threonylcarbamoyl-AMP synthase.